The following is a 78-amino-acid chain: MKFIVLLGALLALLVAVSADRIAREAPEMESVDEAVLTRQAREAEDPAVVEDAIRKFVRWLVQKYGINIHDLIDHFKH.

An N-terminal signal peptide occupies residues Met1 to Ala19. A propeptide spanning residues Asp20–Arg42 is cleaved from the precursor.

As to expression, expressed by the venom gland.

It is found in the secreted. The polypeptide is Small venom protein 2 (Pimpla hypochondriaca (Parasitoid wasp)).